Here is a 301-residue protein sequence, read N- to C-terminus: Homoserine O-acetyltransferase (301 aa).

Cys142 acts as the Acyl-thioester intermediate in catalysis. Positions 163 and 192 each coordinate substrate. His235 (proton acceptor) is an active-site residue. Glu237 is an active-site residue. Residue Arg249 coordinates substrate.

This sequence belongs to the MetA family.

It localises to the cytoplasm. The enzyme catalyses L-homoserine + acetyl-CoA = O-acetyl-L-homoserine + CoA. Its pathway is amino-acid biosynthesis; L-methionine biosynthesis via de novo pathway; O-acetyl-L-homoserine from L-homoserine: step 1/1. Its function is as follows. Transfers an acetyl group from acetyl-CoA to L-homoserine, forming acetyl-L-homoserine. The protein is Homoserine O-acetyltransferase of Succinatimonas hippei (strain DSM 22608 / JCM 16073 / KCTC 15190 / YIT 12066).